A 224-amino-acid polypeptide reads, in one-letter code: Elongation factor Ts (224 aa).

The segment at 81–84 (TDFV) is involved in Mg(2+) ion dislocation from EF-Tu.

Belongs to the EF-Ts family.

The protein resides in the cytoplasm. Functionally, associates with the EF-Tu.GDP complex and induces the exchange of GDP to GTP. It remains bound to the aminoacyl-tRNA.EF-Tu.GTP complex up to the GTP hydrolysis stage on the ribosome. The protein is Elongation factor Ts of Finegoldia magna (strain ATCC 29328 / DSM 20472 / WAL 2508) (Peptostreptococcus magnus).